We begin with the raw amino-acid sequence, 206 residues long: Thiamine-phosphate synthase (206 aa).

4-amino-2-methyl-5-(diphosphooxymethyl)pyrimidine-binding positions include 37–41 and asparagine 69; that span reads QYRNK. Residues aspartate 70 and aspartate 89 each contribute to the Mg(2+) site. Serine 108 serves as a coordination point for 4-amino-2-methyl-5-(diphosphooxymethyl)pyrimidine. 135–137 is a 2-[(2R,5Z)-2-carboxy-4-methylthiazol-5(2H)-ylidene]ethyl phosphate binding site; that stretch reads SST. Lysine 138 is a 4-amino-2-methyl-5-(diphosphooxymethyl)pyrimidine binding site. 2-[(2R,5Z)-2-carboxy-4-methylthiazol-5(2H)-ylidene]ethyl phosphate-binding positions include glycine 165 and 185–186; that span reads IS.

The protein belongs to the thiamine-phosphate synthase family. Mg(2+) serves as cofactor.

It catalyses the reaction 2-[(2R,5Z)-2-carboxy-4-methylthiazol-5(2H)-ylidene]ethyl phosphate + 4-amino-2-methyl-5-(diphosphooxymethyl)pyrimidine + 2 H(+) = thiamine phosphate + CO2 + diphosphate. The catalysed reaction is 2-(2-carboxy-4-methylthiazol-5-yl)ethyl phosphate + 4-amino-2-methyl-5-(diphosphooxymethyl)pyrimidine + 2 H(+) = thiamine phosphate + CO2 + diphosphate. The enzyme catalyses 4-methyl-5-(2-phosphooxyethyl)-thiazole + 4-amino-2-methyl-5-(diphosphooxymethyl)pyrimidine + H(+) = thiamine phosphate + diphosphate. It functions in the pathway cofactor biosynthesis; thiamine diphosphate biosynthesis; thiamine phosphate from 4-amino-2-methyl-5-diphosphomethylpyrimidine and 4-methyl-5-(2-phosphoethyl)-thiazole: step 1/1. In terms of biological role, condenses 4-methyl-5-(beta-hydroxyethyl)thiazole monophosphate (THZ-P) and 2-methyl-4-amino-5-hydroxymethyl pyrimidine pyrophosphate (HMP-PP) to form thiamine monophosphate (TMP). This chain is Thiamine-phosphate synthase, found in Azoarcus sp. (strain BH72).